The chain runs to 379 residues: Beta-1,3-N-acetylglucosaminyltransferase lunatic fringe (379 aa).

The Cytoplasmic portion of the chain corresponds to 1–8 (MLKRCGRR). Residues 9–29 (LLLALAGALLACLLVLTADPP) traverse the membrane as a helical; Signal-anchor for type II membrane protein segment. Residues 30–379 (PPPLPAERGR…TPWCPRTAIF (350 aa)) lie on the Lumenal side of the membrane. Positions 86–107 (RDAGPPPGAAPRPADGHPRPLA) are disordered. Arg-129 is a substrate binding site. The N-linked (GlcNAc...) asparagine glycan is linked to Asn-167. Cystine bridges form between Cys-168/Cys-179 and Cys-197/Cys-260. Asp-201 lines the substrate pocket. Mn(2+) is bound at residue Asp-202. Asp-290 is a catalytic residue. His-314 is a Mn(2+) binding site. Residues Cys-364 and Cys-373 are joined by a disulfide bond.

Belongs to the glycosyltransferase 31 family. Mn(2+) serves as cofactor. Requires Co(2+) as cofactor. In terms of processing, a soluble form may be derived from the membrane form by proteolytic processing.

Its subcellular location is the golgi apparatus. It localises to the golgi apparatus membrane. The catalysed reaction is 3-O-(alpha-L-fucosyl)-L-threonyl-[EGF-like domain protein] + UDP-N-acetyl-alpha-D-glucosamine = 3-O-(N-acetyl-beta-D-glucosaminyl-(1-&gt;3)-alpha-L-fucosyl)-L-threonyl-[EGF-like domain protein] + UDP + H(+). The enzyme catalyses 3-O-(alpha-L-fucosyl)-L-seryl-[EGF-like domain protein] + UDP-N-acetyl-alpha-D-glucosamine = 3-O-(N-acetyl-beta-D-glucosaminyl-(1-&gt;3)-alpha-L-fucosyl)-L-seryl-[EGF-like domain protein] + UDP + H(+). In terms of biological role, glycosyltransferase that initiates the elongation of O-linked fucose residues attached to EGF-like repeats in the extracellular domain of Notch molecules. Modulates NOTCH1 activity by modifying O-fucose residues at specific EGF-like domains resulting in inhibition of NOTCH1 activation by JAG1 and enhancement of NOTCH1 activation by DLL1 via an increase in its binding to DLL1. Decreases the binding of JAG1 to NOTCH2 but not that of DLL1. Essential mediator of somite segmentation and patterning. The protein is Beta-1,3-N-acetylglucosaminyltransferase lunatic fringe of Homo sapiens (Human).